A 228-amino-acid chain; its full sequence is Small ribosomal subunit protein uS2c (228 aa).

Belongs to the universal ribosomal protein uS2 family.

The protein resides in the plastid. It is found in the chloroplast. In Mesostigma viride (Green alga), this protein is Small ribosomal subunit protein uS2c (rps2).